The sequence spans 134 residues: Large ribosomal subunit protein uL22 (134 aa).

The protein belongs to the universal ribosomal protein uL22 family. Part of the 50S ribosomal subunit.

In terms of biological role, this protein binds specifically to 23S rRNA; its binding is stimulated by other ribosomal proteins, e.g. L4, L17, and L20. It is important during the early stages of 50S assembly. It makes multiple contacts with different domains of the 23S rRNA in the assembled 50S subunit and ribosome. Functionally, the globular domain of the protein is located near the polypeptide exit tunnel on the outside of the subunit, while an extended beta-hairpin is found that lines the wall of the exit tunnel in the center of the 70S ribosome. This is Large ribosomal subunit protein uL22 from Gluconacetobacter diazotrophicus (strain ATCC 49037 / DSM 5601 / CCUG 37298 / CIP 103539 / LMG 7603 / PAl5).